The chain runs to 24 residues: Brevinin-1PTb (24 aa).

A disulfide bridge links Cys18 with Cys24.

In terms of tissue distribution, expressed by the skin glands.

It is found in the secreted. Its function is as follows. Has antibacterial activity against the Gram-positive bacterium S.aureus ATCC 25923 and the Gram-negative bacterium E.coli ATCC 25726. In Pulchrana picturata (Malaysian fire frog), this protein is Brevinin-1PTb.